The following is a 450-amino-acid chain: MSKVIGIDLGTTNSVVAVMEGGEPTVITNTEGSRLTPSVVGFSKTGERLVGQLAKRQAVSNPENTISSIKRHMGESYTVDIQGKKYTPQEISAMILQKLKEDAESYLGEKVTQAVITVPAYFNDGQRQATKDAGKIAGLDVLRIVNEPTAAALAYGLDKGGDGKILVFDLGGGTFDVSILELGDGVFEVKATNGNTHLGGDDFDNKVMEWMISEFKKETGIDLSQDKMAEQRLKEAAEKAKIELSTVLSTNINLPFITADATGPKHLDLTLTRAKFNELTEDLVQATMEPTKKAIADSGFTIDEIDKIILVGGSSRIPAVQEAIKSILGKEPSKGVNPDECVAIGAAIQAGVLVGDVKDVLLLDVTPLSLGIETLGGVFTKIIDRNTTIPTSRSQVFSTAVDNQPSVDVHVLQGRREMAADNKTLGRFELTGIPAAPRGVPRIEVTFNID.

Threonine 174 carries the phosphothreonine; by autocatalysis modification.

This sequence belongs to the heat shock protein 70 family.

Functionally, acts as a chaperone. This Megasphaera elsdenii protein is Chaperone protein DnaK (dnaK).